Reading from the N-terminus, the 361-residue chain is Histidinol-phosphate aminotransferase (361 aa).

K219 carries the post-translational modification N6-(pyridoxal phosphate)lysine.

Belongs to the class-II pyridoxal-phosphate-dependent aminotransferase family. Histidinol-phosphate aminotransferase subfamily. As to quaternary structure, homodimer. The cofactor is pyridoxal 5'-phosphate.

It catalyses the reaction L-histidinol phosphate + 2-oxoglutarate = 3-(imidazol-4-yl)-2-oxopropyl phosphate + L-glutamate. It functions in the pathway amino-acid biosynthesis; L-histidine biosynthesis; L-histidine from 5-phospho-alpha-D-ribose 1-diphosphate: step 7/9. The protein is Histidinol-phosphate aminotransferase of Cereibacter sphaeroides (strain KD131 / KCTC 12085) (Rhodobacter sphaeroides).